Reading from the N-terminus, the 301-residue chain is Dihydroorotate dehydrogenase B (NAD(+)), catalytic subunit (301 aa).

Substrate contacts are provided by residues K44, 68–72 (NAMGL), and N122. 44-45 (KS) serves as a coordination point for FMN. N122 contacts FMN. Catalysis depends on C125, which acts as the Nucleophile. 2 residues coordinate FMN: K160 and I186. Substrate is bound at residue 187–188 (NT). FMN contacts are provided by residues G212, 238–239 (GG), and 260–261 (GS).

It belongs to the dihydroorotate dehydrogenase family. Type 1 subfamily. As to quaternary structure, heterotetramer of 2 PyrK and 2 PyrD type B subunits. It depends on FMN as a cofactor.

The protein localises to the cytoplasm. It catalyses the reaction (S)-dihydroorotate + NAD(+) = orotate + NADH + H(+). It functions in the pathway pyrimidine metabolism; UMP biosynthesis via de novo pathway; orotate from (S)-dihydroorotate (NAD(+) route): step 1/1. Functionally, catalyzes the conversion of dihydroorotate to orotate with NAD(+) as electron acceptor. The chain is Dihydroorotate dehydrogenase B (NAD(+)), catalytic subunit (pyrD) from Methanocella arvoryzae (strain DSM 22066 / NBRC 105507 / MRE50).